We begin with the raw amino-acid sequence, 460 residues long: Probable carboxypeptidase ARB_01041 (460 aa).

The N-terminal stretch at 1 to 22 (MQKTYIWALVSLLASSLVDARS) is a signal peptide. Asn98 carries N-linked (GlcNAc...) asparagine glycosylation. Asp175 contributes to the Zn(2+) binding site. The Proton acceptor role is filled by Glu207. Residue Glu208 coordinates Zn(2+). N-linked (GlcNAc...) asparagine glycosylation is present at Asn395.

Belongs to the peptidase M20A family. Requires Zn(2+) as cofactor.

It localises to the secreted. This is Probable carboxypeptidase ARB_01041 from Arthroderma benhamiae (strain ATCC MYA-4681 / CBS 112371) (Trichophyton mentagrophytes).